Here is a 233-residue protein sequence, read N- to C-terminus: Protein DOUBLE-STRAND BREAK FORMATION (233 aa).

Interacts with PRD1; this interaction facilitates a binding to PRD3. Specifically expressed in buds.

Its function is as follows. Required for meiotic double-strand break (DSB) formation, the initial event for meiotic recombination. The sequence is that of Protein DOUBLE-STRAND BREAK FORMATION from Arabidopsis thaliana (Mouse-ear cress).